The following is a 500-amino-acid chain: ATP synthase subunit beta (500 aa).

Position 155–162 (155–162 (GGAGVGKT)) interacts with ATP.

It belongs to the ATPase alpha/beta chains family. In terms of assembly, F-type ATPases have 2 components, CF(1) - the catalytic core - and CF(0) - the membrane proton channel. CF(1) has five subunits: alpha(3), beta(3), gamma(1), delta(1), epsilon(1). CF(0) has three main subunits: a(1), b(2) and c(9-12). The alpha and beta chains form an alternating ring which encloses part of the gamma chain. CF(1) is attached to CF(0) by a central stalk formed by the gamma and epsilon chains, while a peripheral stalk is formed by the delta and b chains.

Its subcellular location is the cell inner membrane. The catalysed reaction is ATP + H2O + 4 H(+)(in) = ADP + phosphate + 5 H(+)(out). Its function is as follows. Produces ATP from ADP in the presence of a proton gradient across the membrane. The catalytic sites are hosted primarily by the beta subunits. In Azobacteroides pseudotrichonymphae genomovar. CFP2, this protein is ATP synthase subunit beta.